Here is a 518-residue protein sequence, read N- to C-terminus: Chromosomal replication initiator protein DnaA (518 aa).

Residues 1–72 (MTLAEFWPLC…VREELAAGRS (72 aa)) are domain I, interacts with DnaA modulators. A domain II region spans residues 72-180 (SAFVFKPGEG…DAEEARYEQT (109 aa)). The interval 145–172 (EPRQAAGSASRPESVAVAKARTDVQRDA) is disordered. Positions 181 to 397 (NLSPDYTFDT…GAFNRVGASS (217 aa)) are domain III, AAA+ region. 4 residues coordinate ATP: Gly225, Gly227, Lys228, and Thr229. The interval 398-518 (RFMNRPVIDI…YEKLLILIQN (121 aa)) is domain IV, binds dsDNA.

The protein belongs to the DnaA family. As to quaternary structure, oligomerizes as a right-handed, spiral filament on DNA at oriC.

It is found in the cytoplasm. Its function is as follows. Plays an essential role in the initiation and regulation of chromosomal replication. ATP-DnaA binds to the origin of replication (oriC) to initiate formation of the DNA replication initiation complex once per cell cycle. Binds the DnaA box (a 9 base pair repeat at the origin) and separates the double-stranded (ds)DNA. Forms a right-handed helical filament on oriC DNA; dsDNA binds to the exterior of the filament while single-stranded (ss)DNA is stabiized in the filament's interior. The ATP-DnaA-oriC complex binds and stabilizes one strand of the AT-rich DNA unwinding element (DUE), permitting loading of DNA polymerase. After initiation quickly degrades to an ADP-DnaA complex that is not apt for DNA replication. Binds acidic phospholipids. In Neisseria meningitidis serogroup B (strain ATCC BAA-335 / MC58), this protein is Chromosomal replication initiator protein DnaA.